The following is a 173-amino-acid chain: Co-chaperone protein HscB (173 aa).

Residues 2–74 (DYFTLLGMPN…LSRAEYMLSL (73 aa)) form the J domain.

This sequence belongs to the HscB family. Interacts with HscA and stimulates its ATPase activity. Interacts with IscU.

Co-chaperone involved in the maturation of iron-sulfur cluster-containing proteins. Seems to help targeting proteins to be folded toward HscA. This is Co-chaperone protein HscB from Proteus mirabilis (strain HI4320).